The sequence spans 257 residues: MVLIRVLANLLILQLSYAQKSSELVIGGHPCNINEHPFLVLVYHDGYQCGGTLINEEWVLTAAHCDGKKMKLQFGLHSKNVPNKDKQTRVPKEKFFCLSSKNFIKWGKDIMLIRLNRSVNNSTHIAPLSLPSSPPSQNTVCNIMGWGTISPTKEIYPDVPHCANINILDHAVCRAFYPGLLEKSKTLCAGILQGGKDICQGDSGGPLICNGQIQGIVSVGGNPCAEPRVPAIYTKVFDHLDWIKSIIAGNTAATCPL.

The N-terminal stretch at 1–18 (MVLIRVLANLLILQLSYA) is a signal peptide. A propeptide spanning residues 19–24 (QKSSEL) is cleaved from the precursor. Residues 25-248 (VIGGHPCNIN…HLDWIKSIIA (224 aa)) enclose the Peptidase S1 domain. Disulfide bonds link C31-C162, C49-C65, C97-C255, C141-C209, C173-C188, and C199-C224. Catalysis depends on charge relay system residues H64 and D109. Residues N116, N120, and N121 are each glycosylated (N-linked (GlcNAc...) asparagine). The active-site Charge relay system is the S203.

The protein belongs to the peptidase S1 family. Snake venom subfamily. Monomer. As to expression, expressed by the venom gland.

It localises to the secreted. Snake venom serine protease that may act in the hemostasis system of the prey. This chain is Snake venom serine protease 2C (TLG2C), found in Craspedocephalus gramineus (Bamboo pit viper).